The following is a 509-amino-acid chain: Maturase K (509 aa).

This sequence belongs to the intron maturase 2 family. MatK subfamily.

The protein localises to the plastid. Its subcellular location is the chloroplast. In terms of biological role, usually encoded in the trnK tRNA gene intron. Probably assists in splicing its own and other chloroplast group II introns. The chain is Maturase K from Amentotaxus argotaenia (Chinese flowering yew).